The primary structure comprises 345 residues: sn-glycerol-3-phosphate import ATP-binding protein UgpC (345 aa).

Positions 4 to 235 constitute an ABC transporter domain; that stretch reads IQLLNIKKQY…PKTIFVADFI (232 aa). ATP is bound at residue 37–44; that stretch reads GPSGCGKS.

The protein belongs to the ABC transporter superfamily. sn-glycerol-3-phosphate importer (TC 3.A.1.1.3) family. The complex is composed of two ATP-binding proteins (UgpC), two transmembrane proteins (UgpA and UgpE) and a solute-binding protein (UgpB).

It localises to the cell inner membrane. The enzyme catalyses sn-glycerol 3-phosphate(out) + ATP + H2O = sn-glycerol 3-phosphate(in) + ADP + phosphate + H(+). Part of the ABC transporter complex UgpBAEC involved in sn-glycerol-3-phosphate (G3P) import. Responsible for energy coupling to the transport system. This is sn-glycerol-3-phosphate import ATP-binding protein UgpC from Bartonella bacilliformis (strain ATCC 35685 / KC583 / Herrer 020/F12,63).